A 497-amino-acid chain; its full sequence is NAD(P)H-quinone oxidoreductase subunit 2, chloroplastic (497 aa).

14 consecutive transmembrane segments (helical) span residues 13–33 (VILPEIIVIVCLLIVLVLDLI), 37–57 (SAWLSTISLTGLVAATIALVF), 76–96 (FTISFRGIITISSALSILIST), 103–123 (GMGLAECLIFILTATVGGLFL), 129–149 (LVTVFVSLECLSLSSYLLVGY), 164–184 (LLMGGASSSIIAYGFSWLYGL), 206–226 (IAVWVALACVVVGIGFKLSAF), 240–260 (PTPVVAFFSVGSKAAALALAT), 274–294 (WHVLLELLALLSMIFGNLIAA), 311–331 (AGYLIIGIVCGNIYGYTGMIT), 332–352 (YMVTYIFMNLGAFGCVILFGL), 373–393 (AFCLSVCLLSLAGIPPLAGFF), 406–426 (GLYLLVYVALITSVISMYYYL), and 462–482 (VGIALCVFISTTLGFVINPII).

This sequence belongs to the complex I subunit 2 family. As to quaternary structure, NDH is composed of at least 16 different subunits, 5 of which are encoded in the nucleus.

It localises to the plastid. The protein localises to the chloroplast thylakoid membrane. It carries out the reaction a plastoquinone + NADH + (n+1) H(+)(in) = a plastoquinol + NAD(+) + n H(+)(out). It catalyses the reaction a plastoquinone + NADPH + (n+1) H(+)(in) = a plastoquinol + NADP(+) + n H(+)(out). Its function is as follows. NDH shuttles electrons from NAD(P)H:plastoquinone, via FMN and iron-sulfur (Fe-S) centers, to quinones in the photosynthetic chain and possibly in a chloroplast respiratory chain. The immediate electron acceptor for the enzyme in this species is believed to be plastoquinone. Couples the redox reaction to proton translocation, and thus conserves the redox energy in a proton gradient. The polypeptide is NAD(P)H-quinone oxidoreductase subunit 2, chloroplastic (Zygnema circumcarinatum (Green alga)).